We begin with the raw amino-acid sequence, 360 residues long: DNA replication and repair protein RecF (360 aa).

ATP is bound at residue 30-37 (GQNGSGKT).

The protein belongs to the RecF family.

Its subcellular location is the cytoplasm. Functionally, the RecF protein is involved in DNA metabolism; it is required for DNA replication and normal SOS inducibility. RecF binds preferentially to single-stranded, linear DNA. It also seems to bind ATP. The polypeptide is DNA replication and repair protein RecF (Shewanella sp. (strain W3-18-1)).